The sequence spans 513 residues: Serine/threonine-protein phosphatase T (513 aa).

TPR repeat units follow at residues 12–45 (ALER…DSTQ), 46–79 (SIYF…DPKN), and 80–113 (IKAY…KPND). Positions 188–513 (KNMSQEFISK…MAYSNGGFGL (326 aa)) are catalytic. The Mn(2+) site is built by D249, H251, D278, and N310. H311 acts as the Proton donor/acceptor in catalysis. The Mn(2+) site is built by H359 and H434.

This sequence belongs to the PPP phosphatase family. PP-5 (PP-T) subfamily. As to quaternary structure, interacts (via TPR repeats) with HSP82 (via C-terminal MEEVD pentapeptide). Requires Mg(2+) as cofactor. Mn(2+) is required as a cofactor.

The protein resides in the nucleus. It catalyses the reaction O-phospho-L-seryl-[protein] + H2O = L-seryl-[protein] + phosphate. The enzyme catalyses O-phospho-L-threonyl-[protein] + H2O = L-threonyl-[protein] + phosphate. With respect to regulation, stimulated by arachidonic acid and other unsaturated fatty acids, and by arachidoyl coenzyme A. In terms of biological role, protein phosphatase that specifically binds to and dephosphorylates the molecular chaperone Hsp90 (HSC82 and HSP82). Dephosphorylation positively regulates the Hsp90 chaperone machinery. In Saccharomyces cerevisiae (strain ATCC 204508 / S288c) (Baker's yeast), this protein is Serine/threonine-protein phosphatase T (PPT1).